The primary structure comprises 374 residues: Ribosomal RNA large subunit methyltransferase G (374 aa).

Belongs to the methyltransferase superfamily. RlmG family.

The protein resides in the cytoplasm. It catalyses the reaction guanosine(1835) in 23S rRNA + S-adenosyl-L-methionine = N(2)-methylguanosine(1835) in 23S rRNA + S-adenosyl-L-homocysteine + H(+). Functionally, specifically methylates the guanine in position 1835 (m2G1835) of 23S rRNA. The sequence is that of Ribosomal RNA large subunit methyltransferase G from Pseudomonas putida (strain ATCC 700007 / DSM 6899 / JCM 31910 / BCRC 17059 / LMG 24140 / F1).